The sequence spans 625 residues: Glutamine--fructose-6-phosphate aminotransferase [isomerizing] (625 aa).

The active-site Nucleophile; for GATase activity is Cys-2. In terms of domain architecture, Glutamine amidotransferase type-2 spans 2-229 (CGIVGFVGRT…NDQIVTITAD (228 aa)). 2 SIS domains span residues 296–436 (IDES…LRGN) and 470–615 (LAQD…VDQP). Lys-620 serves as the catalytic For Fru-6P isomerization activity.

Homodimer.

The protein resides in the cytoplasm. It carries out the reaction D-fructose 6-phosphate + L-glutamine = D-glucosamine 6-phosphate + L-glutamate. Catalyzes the first step in hexosamine metabolism, converting fructose-6P into glucosamine-6P using glutamine as a nitrogen source. In Corynebacterium diphtheriae (strain ATCC 700971 / NCTC 13129 / Biotype gravis), this protein is Glutamine--fructose-6-phosphate aminotransferase [isomerizing].